The chain runs to 398 residues: GPI mannosyltransferase 1 (398 aa).

9 helical membrane-spanning segments follow: residues 4 to 24 (LKYL…FGLY), 79 to 99 (WYHF…LIIL), 114 to 136 (MILS…GSAE), 156 to 176 (VILS…PIIY), 209 to 229 (IIIT…KYGW), 271 to 291 (IEKI…PLIF), 305 to 325 (FVFV…FLIF), 341 to 361 (ITGI…LYFA), and 375 to 395 (GLMY…MKFI).

This sequence belongs to the PIGM family.

The protein localises to the endoplasmic reticulum membrane. It functions in the pathway glycolipid biosynthesis; glycosylphosphatidylinositol-anchor biosynthesis. Functionally, mannosyltransferase involved in glycosylphosphatidylinositol-anchor biosynthesis. Transfers the first alpha-1,4-mannose to GlcN-acyl-PI during GPI precursor assembly. Required for cell wall integrity. This chain is GPI mannosyltransferase 1 (GPI14), found in Candida albicans (strain SC5314 / ATCC MYA-2876) (Yeast).